Consider the following 246-residue polypeptide: Protein crossbronx (246 aa).

Positions 20-177 (QQEYKILAEY…VQESILESKA (158 aa)) constitute a UBC core domain.

It belongs to the ubiquitin-conjugating enzyme family. FTS subfamily.

The protein is Protein crossbronx (cbx) of Drosophila grimshawi (Hawaiian fruit fly).